Here is a 296-residue protein sequence, read N- to C-terminus: CTD kinase subunit gamma (296 aa).

Residues 25-44 form a disordered region; the sequence is RDSITSSSTTTPPSSQQKLN. Low complexity predominate over residues 29–39; it reads TSSSTTTPPSS. The residue at position 35 (threonine 35) is a Phosphothreonine.

It belongs to the CTK3 family. In terms of assembly, CTDK-I consists of three subunits, CTK1, CTK2 and CTK3 (also called alpha, beta and gamma). Interacts with CTK1. Heterodimerization with CTK2 is required to protect this subunit from degradation. Ubiquitinated. Ubiquitination leads to degradation by the 26S proteasome pathway.

Its subcellular location is the nucleus. The protein resides in the nucleolus. It localises to the cytoplasm. In terms of biological role, gamma subunit of the CTDK-I complex, which hyperphosphorylates the C-terminal heptapeptide repeat domain (CTD) of the largest RNA polymerase II subunit. CTDK-I phosphorylates 'Ser-5' if the CTD substrate is not phosphorylated at 'Ser-5', but will phosphorylate 'Ser-2' of a CTD substrate if 'Ser-5' is already phosphorylated. CTDK-I is also more reactive toward substrates that are prephosphorylated at 'Ser-2' or 'Ser-5' compared with an unphosphorylated CTD substrate, therefore efficiently creating doubly phosphorylated CTD repeats. Involved in RNA polymerase I transcription and RNA polymerase II transcriptional elongation, and as part of the CTDK-I complex, pre-mRNA 3'-end processing and SET2 mediated H3K36 methylation. Together with CTK2, required for CTK1 CTD kinase activation. Required for DNA damage induced transcription. Involved in the adaptation to alternative carbon sources, including galactose, glycerol and ethanol, but not raffinose. Required for the integrity of the rDNA locus. The polypeptide is CTD kinase subunit gamma (CTK3) (Saccharomyces cerevisiae (strain ATCC 204508 / S288c) (Baker's yeast)).